The chain runs to 238 residues: MGEEFPTISLLGIDFNLSNILMITVTCVIVLLIAIICTRNLQRRPTGKQNFIEWIMDFVRGIINSNMDWKTGGRFHVLGITLLMFIFVANMLGLPFQIAINDEVWWRSPTADPIVTLTLAIMVLGLTHYYGIKMRGFKHYFVGTYFSPMKFLFPLKLVEEFANTLTLGLRLYGNIFAGEVLLTIIATQLAHMNIFVGVLAIIPALLWQGFSIFIGAIQAYIFTMLTMVYMSHKVSDEH.

The next 4 membrane-spanning stretches (helical) occupy residues 17-37 (LSNI…AIIC), 80-100 (ITLL…QIAI), 112-132 (DPIV…YYGI), and 194-214 (IFVG…SIFI).

The protein belongs to the ATPase A chain family. In terms of assembly, F-type ATPases have 2 components, CF(1) - the catalytic core - and CF(0) - the membrane proton channel. CF(1) has five subunits: alpha(3), beta(3), gamma(1), delta(1), epsilon(1). CF(0) has three main subunits: a(1), b(2) and c(9-12). The alpha and beta chains form an alternating ring which encloses part of the gamma chain. CF(1) is attached to CF(0) by a central stalk formed by the gamma and epsilon chains, while a peripheral stalk is formed by the delta and b chains.

Its subcellular location is the cell membrane. Key component of the proton channel; it plays a direct role in the translocation of protons across the membrane. The sequence is that of ATP synthase subunit a from Listeria welshimeri serovar 6b (strain ATCC 35897 / DSM 20650 / CCUG 15529 / CIP 8149 / NCTC 11857 / SLCC 5334 / V8).